Reading from the N-terminus, the 493-residue chain is MTALNQLTLTEAREGLATGEFTAVELTQSYLDAMAEARTLNAYVLETADKALAMAAESDKRIASGDAGKLEGLPIGVKDMFCTDGVRTTAGSKILGDFVPPYESTVTSQLWRDGAVMLGKLNNDEFAMGSSNETSAQGPVVSPWRREGDSAPLVPGGSSGGSAAAVAAFLCAGATGTDTGGSIRQPAAFTGTVGIKPTYGRCSRFGIIAYASSLDQAGPFARTVNDAAVLLRSMAGYDPKDSTSVNRSVPDYEDAVGASIKGKRIGIPREYRVEGLDPEIAGMWEEGAQWLRDAGAEVVDISLPHTKYALPTYYIVAPAEASSNLARYDGVRYGTRVPGRDIIDMYERTRAAGFGPEVRRRIMIGTYVLSAGYYDAYYVKAQKVRTLIKRDFDDVFAQGVDAVLTPATPSPAFGIGEKGSADPVEMYLQDIFTVTVNLAGLPGISVPAGLSCKNLPLGLQLIGRPFEEETLFSLAQVVEEAAGRFPVDDLWWK.

Active-site charge relay system residues include lysine 78 and serine 158. Residue serine 182 is the Acyl-ester intermediate of the active site.

Belongs to the amidase family. GatA subfamily. As to quaternary structure, heterotrimer of A, B and C subunits.

It catalyses the reaction L-glutamyl-tRNA(Gln) + L-glutamine + ATP + H2O = L-glutaminyl-tRNA(Gln) + L-glutamate + ADP + phosphate + H(+). Allows the formation of correctly charged Gln-tRNA(Gln) through the transamidation of misacylated Glu-tRNA(Gln) in organisms which lack glutaminyl-tRNA synthetase. The reaction takes place in the presence of glutamine and ATP through an activated gamma-phospho-Glu-tRNA(Gln). This is Glutamyl-tRNA(Gln) amidotransferase subunit A from Azorhizobium caulinodans (strain ATCC 43989 / DSM 5975 / JCM 20966 / LMG 6465 / NBRC 14845 / NCIMB 13405 / ORS 571).